A 902-amino-acid chain; its full sequence is Protein translocase subunit SecA (902 aa).

Residues glutamine 87, 105 to 109 (GEGKT), and aspartate 512 contribute to the ATP site. A disordered region spans residues 850–902 (RLAKQQQLSHEVTKESQMSAVDGQVASGKKVGRNEPCPCGSGKKYKHCHGKLG). Polar residues predominate over residues 853–868 (KQQQLSHEVTKESQMS). Cysteine 886, cysteine 888, cysteine 897, and histidine 898 together coordinate Zn(2+). A compositionally biased stretch (basic residues) spans 892–902 (KKYKHCHGKLG).

Belongs to the SecA family. In terms of assembly, monomer and homodimer. Part of the essential Sec protein translocation apparatus which comprises SecA, SecYEG and auxiliary proteins SecDF-YajC and YidC. Zn(2+) is required as a cofactor.

It is found in the cell inner membrane. The protein resides in the cytoplasm. The enzyme catalyses ATP + H2O + cellular proteinSide 1 = ADP + phosphate + cellular proteinSide 2.. Functionally, part of the Sec protein translocase complex. Interacts with the SecYEG preprotein conducting channel. Has a central role in coupling the hydrolysis of ATP to the transfer of proteins into and across the cell membrane, serving both as a receptor for the preprotein-SecB complex and as an ATP-driven molecular motor driving the stepwise translocation of polypeptide chains across the membrane. This chain is Protein translocase subunit SecA, found in Proteus mirabilis (strain HI4320).